The sequence spans 640 residues: Portal protein (640 aa).

Belongs to the herpesviridae portal protein family. In terms of assembly, homododecamerizes. Interacts with terminase subunits TRM1 and TRM3.

It localises to the virion. The protein resides in the host nucleus. In terms of biological role, forms a portal in the viral capsid through which viral DNA is translocated during DNA packaging. Assembles as a dodecamer at a single fivefold axe of the T=16 icosahedric capsid. Binds to the molecular motor that translocates the viral DNA, termed terminase. The sequence is that of Portal protein (U76) from Human herpesvirus 7 (strain JI) (HHV-7).